Consider the following 147-residue polypeptide: MSQGQGGITLDDLIAQADYLKRYIDSLQRTQLELLESINSIDSAKQAIETIKSGNKEMLVFIDRKGYLLAKVGGIVGDKVTVHLGLSYYAEVDLDSAIKILDKRKDEISKAAQNLNNELQKAASTYNQIVDILNQIQQAAARRQQGE.

The protein belongs to the prefoldin alpha subunit family. Heterohexamer of two alpha and four beta subunits.

It is found in the cytoplasm. Its function is as follows. Molecular chaperone capable of stabilizing a range of proteins. Seems to fulfill an ATP-independent, HSP70-like function in archaeal de novo protein folding. This is Prefoldin subunit alpha from Saccharolobus islandicus (strain L.S.2.15 / Lassen #1) (Sulfolobus islandicus).